Consider the following 89-residue polypeptide: Putative regulatory protein MAE_11840 (89 aa).

This sequence belongs to the RemA family.

The sequence is that of Putative regulatory protein MAE_11840 from Microcystis aeruginosa (strain NIES-843 / IAM M-2473).